Reading from the N-terminus, the 54-residue chain is Califin-C (54 aa).

The cysteines at positions 25 and 53 are disulfide-linked. Leucine 36 is subject to Leucine amide.

This sequence belongs to the molluscan ELH family. This protein consists of a large 36-residue subunit, bound by a single disulfide-bond to a small 18-residue subunit.

The protein resides in the secreted. Injected in sexually mature animals califin C excites LB and LC cells of the abdominal ganglion and cause egg-laying. The polypeptide is Califin-C (Aplysia californica (California sea hare)).